The primary structure comprises 349 residues: Nicotinate-nucleotide--dimethylbenzimidazole phosphoribosyltransferase (349 aa).

Residue E313 is the Proton acceptor of the active site.

It belongs to the CobT family.

The enzyme catalyses 5,6-dimethylbenzimidazole + nicotinate beta-D-ribonucleotide = alpha-ribazole 5'-phosphate + nicotinate + H(+). The protein operates within nucleoside biosynthesis; alpha-ribazole biosynthesis; alpha-ribazole from 5,6-dimethylbenzimidazole: step 1/2. Functionally, catalyzes the synthesis of alpha-ribazole-5'-phosphate from nicotinate mononucleotide (NAMN) and 5,6-dimethylbenzimidazole (DMB). The chain is Nicotinate-nucleotide--dimethylbenzimidazole phosphoribosyltransferase from Mycobacterium avium (strain 104).